The sequence spans 224 residues: Large ribosomal subunit protein uL4 (224 aa).

The segment at 52–109 is disordered; that stretch reads AAARQGTHSTKTRGDVSGGGRKPYRQKGTGRARQGSTRTPQFTGGGVVHGPKPRDYSQ.

It belongs to the universal ribosomal protein uL4 family. Part of the 50S ribosomal subunit.

Functionally, one of the primary rRNA binding proteins, this protein initially binds near the 5'-end of the 23S rRNA. It is important during the early stages of 50S assembly. It makes multiple contacts with different domains of the 23S rRNA in the assembled 50S subunit and ribosome. Forms part of the polypeptide exit tunnel. The sequence is that of Large ribosomal subunit protein uL4 from Mycobacterium ulcerans (strain Agy99).